We begin with the raw amino-acid sequence, 537 residues long: CTP synthase (537 aa).

An amidoligase domain region spans residues 1–269; sequence MNQTKYIFVT…DVVALKKLDL (269 aa). Ser15 contacts CTP. Ser15 is a binding site for UTP. ATP is bound at residue 16-21; that stretch reads SLGKGI. Residue Tyr56 coordinates L-glutamine. Asp73 is an ATP binding site. Mg(2+)-binding residues include Asp73 and Glu143. Residues 150–152, 190–195, and Lys226 contribute to the CTP site; these read DIE and KTKPTQ. UTP-binding positions include 190 to 195 and Lys226; that span reads KTKPTQ. The Glutamine amidotransferase type-1 domain occupies 295 to 537; it reads NIGLVGKYVE…VAAAVNAHKK (243 aa). Gly357 contributes to the L-glutamine binding site. Cys384 serves as the catalytic Nucleophile; for glutamine hydrolysis. L-glutamine-binding positions include 385 to 388, Glu408, and Arg465; that span reads LGMQ. Residues His510 and Glu512 contribute to the active site.

Belongs to the CTP synthase family. As to quaternary structure, homotetramer.

It carries out the reaction UTP + L-glutamine + ATP + H2O = CTP + L-glutamate + ADP + phosphate + 2 H(+). It catalyses the reaction L-glutamine + H2O = L-glutamate + NH4(+). The catalysed reaction is UTP + NH4(+) + ATP = CTP + ADP + phosphate + 2 H(+). The protein operates within pyrimidine metabolism; CTP biosynthesis via de novo pathway; CTP from UDP: step 2/2. Allosterically activated by GTP, when glutamine is the substrate; GTP has no effect on the reaction when ammonia is the substrate. The allosteric effector GTP functions by stabilizing the protein conformation that binds the tetrahedral intermediate(s) formed during glutamine hydrolysis. Inhibited by the product CTP, via allosteric rather than competitive inhibition. Functionally, catalyzes the ATP-dependent amination of UTP to CTP with either L-glutamine or ammonia as the source of nitrogen. Regulates intracellular CTP levels through interactions with the four ribonucleotide triphosphates. In Flavobacterium johnsoniae (strain ATCC 17061 / DSM 2064 / JCM 8514 / BCRC 14874 / CCUG 350202 / NBRC 14942 / NCIMB 11054 / UW101) (Cytophaga johnsonae), this protein is CTP synthase.